A 397-amino-acid chain; its full sequence is Adenylosuccinate synthetase (397 aa).

Residues 11 to 17 and 39 to 41 contribute to the GTP site; these read GDEGKGK and GHT. Asp12 functions as the Proton acceptor in the catalytic mechanism. Mg(2+)-binding residues include Asp12 and Gly39. Residues 12–15, 37–40, Thr125, Arg139, Gln212, Thr227, and Arg290 each bind IMP; these read DEGK and NAGH. Catalysis depends on His40, which acts as the Proton donor. 286 to 292 is a binding site for substrate; sequence STTGRPR. Residues Arg292, 318 to 320, and 386 to 388 contribute to the GTP site; these read KAD and STG.

This sequence belongs to the adenylosuccinate synthetase family. In terms of assembly, homodimer. Mg(2+) is required as a cofactor.

Its subcellular location is the cytoplasm. It carries out the reaction IMP + L-aspartate + GTP = N(6)-(1,2-dicarboxyethyl)-AMP + GDP + phosphate + 2 H(+). Its pathway is purine metabolism; AMP biosynthesis via de novo pathway; AMP from IMP: step 1/2. Functionally, plays an important role in the de novo pathway of purine nucleotide biosynthesis. Catalyzes the first committed step in the biosynthesis of AMP from IMP. The polypeptide is Adenylosuccinate synthetase (Thermotoga maritima (strain ATCC 43589 / DSM 3109 / JCM 10099 / NBRC 100826 / MSB8)).